The primary structure comprises 273 residues: Pre-mRNA-splicing factor CWC23 (273 aa).

Residues 15-87 (DLYALLEVSI…SLRATYNRWL (73 aa)) form the J domain.

This sequence belongs to the DnaJ family. As to quaternary structure, associated with the spliceosome.

The protein resides in the cytoplasm. It localises to the nucleus. Its function is as follows. Involved in pre-mRNA splicing. May be involved in endoplasmic reticulum-associated protein degradation (ERAD) and required for growth at low and high temperatures. In Eremothecium gossypii (strain ATCC 10895 / CBS 109.51 / FGSC 9923 / NRRL Y-1056) (Yeast), this protein is Pre-mRNA-splicing factor CWC23 (CWC23).